Reading from the N-terminus, the 49-residue chain is Defensin-like protein 1 (49 aa).

Disulfide bonds link Cys3/Cys49, Cys14/Cys35, Cys20/Cys43, and Cys24/Cys45.

The protein belongs to the DEFL family.

It localises to the secreted. In terms of biological role, possesses antimicrobial activity sensitive to inorganic cations. Binds specifically to the fungal plasma membrane. Has no inhibitory effect on insect gut alpha-amylase. This chain is Defensin-like protein 1, found in Clitoria ternatea (Butterfly pea).